The chain runs to 287 residues: Probable ribosomal RNA small subunit methyltransferase A (287 aa).

S-adenosyl-L-methionine is bound by residues His-29, Leu-31, Gly-56, Glu-77, Asp-102, and Asn-117.

Belongs to the class I-like SAM-binding methyltransferase superfamily. rRNA adenine N(6)-methyltransferase family. RsmA subfamily.

Its subcellular location is the cytoplasm. Specifically dimethylates two adjacent adenosines in the loop of a conserved hairpin near the 3'-end of 16S rRNA in the 30S particle. May play a critical role in biogenesis of 30S subunits. The sequence is that of Probable ribosomal RNA small subunit methyltransferase A from Methanosarcina barkeri (strain Fusaro / DSM 804).